The following is a 715-amino-acid chain: Myosin light chain kinase 3 (715 aa).

The tract at residues Val-67–Pro-114 is disordered. Positions Val-404–Leu-659 constitute a Protein kinase domain. Residues Leu-410 to Val-418 and Lys-433 each bind ATP. Residue Asp-525 is the Proton acceptor of the active site.

It belongs to the protein kinase superfamily. CAMK Ser/Thr protein kinase family. Mg(2+) is required as a cofactor. In terms of processing, phosphorylated on serine residues.

The protein resides in the cytoplasm. The enzyme catalyses L-seryl-[myosin light chain] + ATP = O-phospho-L-seryl-[myosin light chain] + ADP + H(+). It carries out the reaction L-threonyl-[myosin light chain] + ATP = O-phospho-L-threonyl-[myosin light chain] + ADP + H(+). Functionally, kinase that phosphorylates MYL2 in vitro. Increases cardiomyocyte contractility. Required for sarcomere formation in the developing heart. The polypeptide is Myosin light chain kinase 3 (mylk3) (Danio rerio (Zebrafish)).